Reading from the N-terminus, the 236-residue chain is Transcriptional regulatory protein RprY (236 aa).

The region spanning 9-123 (RILLCEDDEN…ELTFRIEAIL (115 aa)) is the Response regulatory domain. Residue Asp-58 is modified to 4-aspartylphosphate. The segment at residues 134–231 (SNVYKIGKFT…IHGKGYKLIT (98 aa)) is a DNA-binding region (ompR/PhoB-type).

Post-translationally, phosphorylated by RprX.

The protein localises to the cytoplasm. In terms of biological role, member of the two-component regulatory system RprX/RprY. The polypeptide is Transcriptional regulatory protein RprY (rprY) (Bacteroides fragilis (strain YCH46)).